The primary structure comprises 46 residues: Mu-segestritoxin-Sf1g (46 aa).

4 disulfide bridges follow: C3–C19, C10–C22, C18–C42, and C24–C40. The segment at 31-33 is keys region for toxin activity; sequence RPW.

Belongs to the neurotoxin 16 (SFI) family. As to expression, expressed by the venom gland.

The protein resides in the secreted. In terms of biological role, insecticidal toxin. It inhibits insect voltage-gated sodium channels (Nav) by partially blocking the channel pore in DUM neurons from the American cockroach, not by acting as a gating modifier. The inhibition is only partially reversible after prolonged washout. In vivo, the toxin causes flaccid paralysis followed by death when injected into Heliothis virescens larvae. It also causes uncoordinated movements followed by full paralysis to sheep blowflies (Lucilia cuprina). When the toxin is fused to snowdrop lectin, it is orally active against larvae of the tomato moth (Laconobia oleracea), the rice brown planthopper (Nilaparvata lugens), and the peach-potato aphid (Myzus persicae). This chain is Mu-segestritoxin-Sf1g, found in Segestria florentina (Tube-web spider).